The chain runs to 245 residues: GDSL esterase/lipase At4g16220 (245 aa).

The first 24 residues, 1-24 (MSSLVSRCQVIALLVLFFFGVCLA), serve as a signal peptide directing secretion. Ser37 serves as the catalytic Nucleophile.

The protein belongs to the 'GDSL' lipolytic enzyme family.

The protein localises to the secreted. This Arabidopsis thaliana (Mouse-ear cress) protein is GDSL esterase/lipase At4g16220.